Reading from the N-terminus, the 274-residue chain is Glutamate--cysteine ligase regulatory subunit (274 aa).

S59 is subject to Phosphoserine. K263 is modified (N6-acetyllysine).

The protein belongs to the aldo/keto reductase family. Glutamate--cysteine ligase light chain subfamily. Heterodimer of a catalytic heavy chain and a regulatory light chain. Most abundant in kidney. Also found in liver and testis.

The protein operates within sulfur metabolism; glutathione biosynthesis; glutathione from L-cysteine and L-glutamate: step 1/2. The protein is Glutamate--cysteine ligase regulatory subunit (Gclm) of Rattus norvegicus (Rat).